An 83-amino-acid polypeptide reads, in one-letter code: Mu-conotoxin-like PnMKLT1-014 (83 aa).

The signal sequence occupies residues 1-22; the sequence is MNLTCMMIVAVLFLTAWTFVMA. Residues 23–50 constitute a propeptide that is removed on maturation; that stretch reads DDSNNGLANLFSKSRYEMEDPEPSKLEK. 3 disulfides stabilise this stretch: C54–C72, C61–C77, and C71–C82.

This sequence belongs to the conotoxin O1 superfamily. In terms of tissue distribution, expressed by the venom duct.

Its subcellular location is the secreted. Functionally, mu-conotoxins block voltage-gated sodium channels (Nav). This chain is Mu-conotoxin-like PnMKLT1-014, found in Conus pennaceus (Feathered cone).